A 113-amino-acid polypeptide reads, in one-letter code: uncharacterized protein (113 aa).

The protein resides in the mitochondrion. This is an uncharacterized protein from Arabidopsis thaliana (Mouse-ear cress).